Consider the following 285-residue polypeptide: Neuralized-like protein 2 (285 aa).

The interval 1–20 (MAAASEPVDSGALWGLERPE) is disordered. Residues 23–244 (PTRFHRVHGA…STKSVRLVQL (222 aa)) enclose the NHR domain. The SOCS box domain maps to 250-285 (SLQTLCRLVIQRSMVHRLAIDGLHLPKELKDFCKYE).

Probable component the ECS(NEURL2) E3 ubiquitin-protein ligase complex consisting of ELOB/Elongin B, ELOC/Elongin C, CUL5, RBX1 and NEURL2. Interacts with CTNNB1. In terms of tissue distribution, expressed specifically in skeletal and cardiac muscles.

It is found in the cytoplasm. Its pathway is protein modification; protein ubiquitination. Plays an important role in the process of myofiber differentiation and maturation. Probable substrate-recognition component of a SCF-like ECS (Elongin BC-CUL2/5-SOCS-box protein) E3 ubiquitin-protein ligase complex, which mediates the ubiquitination of proteins. Probably contributes to catalysis through recognition and positioning of the substrate and the ubiquitin-conjugating enzyme. During myogenesis, controls the ubiquitination and degradation of the specific pool of CTNNB1/beta-catenin located at the sarcolemma. The polypeptide is Neuralized-like protein 2 (NEURL2) (Homo sapiens (Human)).